The sequence spans 354 residues: Uroporphyrinogen decarboxylase (354 aa).

Residues 27 to 31 (RQAGR), aspartate 77, tyrosine 154, serine 209, and histidine 327 contribute to the substrate site.

The protein belongs to the uroporphyrinogen decarboxylase family. As to quaternary structure, homodimer.

It is found in the cytoplasm. The catalysed reaction is uroporphyrinogen III + 4 H(+) = coproporphyrinogen III + 4 CO2. It functions in the pathway porphyrin-containing compound metabolism; protoporphyrin-IX biosynthesis; coproporphyrinogen-III from 5-aminolevulinate: step 4/4. Catalyzes the decarboxylation of four acetate groups of uroporphyrinogen-III to yield coproporphyrinogen-III. The protein is Uroporphyrinogen decarboxylase of Shewanella sp. (strain ANA-3).